Here is a 79-residue protein sequence, read N- to C-terminus: Tungsten-containing formylmethanofuran dehydrogenase 2 subunit G (79 aa).

4Fe-4S ferredoxin-type domains follow at residues 2 to 31 and 51 to 79; these read VKIV…SPNV and TVSV…EIKT. [4Fe-4S] cluster-binding residues include C11, C14, C17, C21, C60, C63, C66, and C70.

[4Fe-4S] cluster serves as cofactor.

It carries out the reaction N-formylmethanofuran + 2 oxidized [2Fe-2S]-[ferredoxin] + H2O = methanofuran + 2 reduced [2Fe-2S]-[ferredoxin] + CO2 + H(+). Its pathway is one-carbon metabolism; methanogenesis from CO(2); 5,10-methenyl-5,6,7,8-tetrahydromethanopterin from CO(2): step 1/3. With respect to regulation, not inactivated by cyanide. In terms of biological role, catalyzes the reversible oxidation of CO(2) and methanofuran (MFR) to N-formylmethanofuran (CHO-MFR). This enzyme is oxygen-labile. May function as an electron transfer protein. The chain is Tungsten-containing formylmethanofuran dehydrogenase 2 subunit G (fwdG) from Methanopyrus kandleri (strain AV19 / DSM 6324 / JCM 9639 / NBRC 100938).